Consider the following 283-residue polypeptide: Flagellar filament 35 kDa core protein (283 aa).

This sequence belongs to the bacterial flagellin family. The flagellum consists of two outer layers around a core that contains several antigenically related polypeptides.

Its subcellular location is the periplasmic flagellum. It is found in the periplasm. Functionally, component of the core of the flagella. This Leptospira interrogans serogroup Icterohaemorrhagiae serovar Lai (strain 56601) protein is Flagellar filament 35 kDa core protein (flaB).